Here is a 98-residue protein sequence, read N- to C-terminus: Cell division topological specificity factor (98 aa).

Belongs to the MinE family.

In terms of biological role, prevents the cell division inhibition by proteins MinC and MinD at internal division sites while permitting inhibition at polar sites. This ensures cell division at the proper site by restricting the formation of a division septum at the midpoint of the long axis of the cell. This is Cell division topological specificity factor from Nitrosomonas eutropha (strain DSM 101675 / C91 / Nm57).